Here is a 429-residue protein sequence, read N- to C-terminus: Enolase (429 aa).

Q162 lines the (2R)-2-phosphoglycerate pocket. E204 functions as the Proton donor in the catalytic mechanism. D241, E283, and D310 together coordinate Mg(2+). Positions 335, 364, 365, and 386 each coordinate (2R)-2-phosphoglycerate. The active-site Proton acceptor is the K335.

The protein belongs to the enolase family. Requires Mg(2+) as cofactor.

The protein resides in the cytoplasm. It localises to the secreted. Its subcellular location is the cell surface. It catalyses the reaction (2R)-2-phosphoglycerate = phosphoenolpyruvate + H2O. Its pathway is carbohydrate degradation; glycolysis; pyruvate from D-glyceraldehyde 3-phosphate: step 4/5. Its function is as follows. Catalyzes the reversible conversion of 2-phosphoglycerate (2-PG) into phosphoenolpyruvate (PEP). It is essential for the degradation of carbohydrates via glycolysis. This is Enolase from Mycobacterium leprae (strain TN).